A 239-amino-acid chain; its full sequence is Uridylate kinase (239 aa).

Lysine 10 to glycine 13 serves as a coordination point for ATP. The tract at residues glycine 18 to glycine 23 is involved in allosteric activation by GTP. Residue glycine 52 participates in UMP binding. Positions 53 and 57 each coordinate ATP. UMP-binding positions include aspartate 72 and threonine 133 to threonine 140. ATP contacts are provided by asparagine 161, tyrosine 167, and aspartate 170.

It belongs to the UMP kinase family. In terms of assembly, homohexamer.

It is found in the cytoplasm. It carries out the reaction UMP + ATP = UDP + ADP. The protein operates within pyrimidine metabolism; CTP biosynthesis via de novo pathway; UDP from UMP (UMPK route): step 1/1. Allosterically activated by GTP. Inhibited by UTP. Catalyzes the reversible phosphorylation of UMP to UDP. This chain is Uridylate kinase, found in Lacticaseibacillus paracasei (strain ATCC 334 / BCRC 17002 / CCUG 31169 / CIP 107868 / KCTC 3260 / NRRL B-441) (Lactobacillus paracasei).